Here is a 329-residue protein sequence, read N- to C-terminus: Phospho-N-acetylmuramoyl-pentapeptide-transferase (329 aa).

The next 9 helical transmembrane spans lie at Met1 to Pro21, Met53 to Phe73, Phe76 to Leu96, Gly109 to Ile129, Ile141 to Val161, Gly175 to His195, Tyr198 to Asn218, Phe237 to Val257, and Ile309 to Phe329.

This sequence belongs to the glycosyltransferase 4 family. MraY subfamily. Requires Mg(2+) as cofactor.

The protein localises to the cell membrane. It carries out the reaction UDP-N-acetyl-alpha-D-muramoyl-L-alanyl-gamma-D-glutamyl-L-lysyl-D-alanyl-D-alanine + di-trans,octa-cis-undecaprenyl phosphate = Mur2Ac(oyl-L-Ala-gamma-D-Glu-L-Lys-D-Ala-D-Ala)-di-trans,octa-cis-undecaprenyl diphosphate + UMP. It participates in cell wall biogenesis; peptidoglycan biosynthesis. In terms of biological role, catalyzes the initial step of the lipid cycle reactions in the biosynthesis of the cell wall peptidoglycan: transfers peptidoglycan precursor phospho-MurNAc-pentapeptide from UDP-MurNAc-pentapeptide onto the lipid carrier undecaprenyl phosphate, yielding undecaprenyl-pyrophosphoryl-MurNAc-pentapeptide, known as lipid I. This chain is Phospho-N-acetylmuramoyl-pentapeptide-transferase, found in Lactococcus lactis subsp. cremoris (strain SK11).